A 193-amino-acid chain; its full sequence is Imidazoleglycerol-phosphate dehydratase (193 aa).

It belongs to the imidazoleglycerol-phosphate dehydratase family.

Its subcellular location is the cytoplasm. It carries out the reaction D-erythro-1-(imidazol-4-yl)glycerol 3-phosphate = 3-(imidazol-4-yl)-2-oxopropyl phosphate + H2O. The protein operates within amino-acid biosynthesis; L-histidine biosynthesis; L-histidine from 5-phospho-alpha-D-ribose 1-diphosphate: step 6/9. The sequence is that of Imidazoleglycerol-phosphate dehydratase from Methanoculleus marisnigri (strain ATCC 35101 / DSM 1498 / JR1).